The primary structure comprises 262 residues: Probable carboxylesterase SOBER1-like (262 aa).

Active-site charge relay system residues include S151, D205, and H237.

It belongs to the AB hydrolase superfamily. AB hydrolase 2 family.

Carboxylesterase. This chain is Probable carboxylesterase SOBER1-like, found in Arabidopsis thaliana (Mouse-ear cress).